The sequence spans 407 residues: P2X receptor D (407 aa).

Residues 1–22 are Cytoplasmic-facing; that stretch reads MDWDNIFSYNTAKIVTIKDRRL. The helical transmembrane segment at 23–43 threads the bilayer; it reads GGLHIIFMVLIIVYIVIYSTI. Topologically, residues 44-300 are lumenal; the sequence is YKKGYLLTET…IQNGEIGSFN (257 aa). The segment at 283 to 296 is pore-forming motif; the sequence is RHGIRLIFIQNGEI. A helical membrane pass occupies residues 301 to 321; it reads FQALLLTFVSGLGLLAISTVL. Topologically, residues 322-407 are cytoplasmic; that stretch reads VDQLAIRFLP…QNIQNNNIIL (86 aa). Residues 371–394 are disordered; that stretch reads KNNENNNNNDDYNDDDNEIFDDNN. Acidic residues predominate over residues 381-391; sequence DYNDDDNEIFD.

This sequence belongs to the P2X receptor family.

The protein localises to the contractile vacuole membrane. Its function is as follows. P2X receptors are ligand-gated ion channels that play a role in intracellular calcium signaling. ATP does not evoke inward currents in p2xD. Not essential for osmoregulation. The chain is P2X receptor D (p2xD) from Dictyostelium discoideum (Social amoeba).